The following is a 436-amino-acid chain: Protein translocase subunit SecY (436 aa).

8 consecutive transmembrane segments (helical) span residues 17–37, 72–92, 122–142, 146–166, 209–229, 269–289, 309–329, and 380–400; these read ILLT…PVPY, FGLL…IQLL, TFFW…EVIF, LQVY…VLWF, FSNI…CIYI, VMPL…FEII, ISYW…IFFF, and IFLI…NLNI.

It belongs to the SecY/SEC61-alpha family. As to quaternary structure, component of the plastid Sec protein translocase complex, which is composed of at least SecY and SecE.

It is found in the plastid. Its subcellular location is the chloroplast thylakoid membrane. In terms of biological role, the central subunit of the protein translocation channel SecYE. Consists of two halves. These two domains form a lateral gate at the front which open onto the bilayer between TMs 2 and 7, and are clamped together by SecE at the back. The channel is closed by both a pore ring composed of hydrophobic SecY resides and a short helix (helix 2A) on the extracellular side of the membrane which forms a plug. The sequence is that of Protein translocase subunit SecY from Vaucheria litorea (Yellow-green alga).